We begin with the raw amino-acid sequence, 178 residues long: Alkyl hydroperoxide reductase AhpD (178 aa).

Catalysis depends on Cys131, which acts as the Proton donor. A disulfide bridge links Cys131 with Cys134. Cys134 acts as the Cysteine sulfenic acid (-SOH) intermediate in catalysis.

The protein belongs to the AhpD family. Homotrimer.

It catalyses the reaction N(6)-[(R)-dihydrolipoyl]-L-lysyl-[lipoyl-carrier protein] + a hydroperoxide = N(6)-[(R)-lipoyl]-L-lysyl-[lipoyl-carrier protein] + an alcohol + H2O. In terms of biological role, antioxidant protein with alkyl hydroperoxidase activity. Required for the reduction of the AhpC active site cysteine residues and for the regeneration of the AhpC enzyme activity. The protein is Alkyl hydroperoxide reductase AhpD of Streptomyces coelicolor (strain ATCC BAA-471 / A3(2) / M145).